The primary structure comprises 351 residues: Selenide, water dikinase (351 aa).

Sec15 is a catalytic residue. Position 15 (Sec15) is a non-standard amino acid, selenocysteine. ATP contacts are provided by residues Lys18 and Asp47–Glu49. A Mg(2+)-binding site is contributed by Asp50. ATP contacts are provided by residues Asp67, Asp90, and Gly138 to Ser140. Asp90 is a Mg(2+) binding site. Residue Asp227 coordinates Mg(2+).

The protein belongs to the selenophosphate synthase 1 family. Class I subfamily. As to quaternary structure, homodimer. Mg(2+) serves as cofactor.

The enzyme catalyses hydrogenselenide + ATP + H2O = selenophosphate + AMP + phosphate + 2 H(+). In terms of biological role, synthesizes selenophosphate from selenide and ATP. The polypeptide is Selenide, water dikinase (Nitratidesulfovibrio vulgaris (strain ATCC 29579 / DSM 644 / CCUG 34227 / NCIMB 8303 / VKM B-1760 / Hildenborough) (Desulfovibrio vulgaris)).